We begin with the raw amino-acid sequence, 428 residues long: Tryptophan synthase beta chain (428 aa).

Lysine 100 is modified (N6-(pyridoxal phosphate)lysine).

This sequence belongs to the TrpB family. Tetramer of two alpha and two beta chains. It depends on pyridoxal 5'-phosphate as a cofactor.

The enzyme catalyses (1S,2R)-1-C-(indol-3-yl)glycerol 3-phosphate + L-serine = D-glyceraldehyde 3-phosphate + L-tryptophan + H2O. It functions in the pathway amino-acid biosynthesis; L-tryptophan biosynthesis; L-tryptophan from chorismate: step 5/5. In terms of biological role, the beta subunit is responsible for the synthesis of L-tryptophan from indole and L-serine. This is Tryptophan synthase beta chain from Streptomyces avermitilis (strain ATCC 31267 / DSM 46492 / JCM 5070 / NBRC 14893 / NCIMB 12804 / NRRL 8165 / MA-4680).